A 430-amino-acid polypeptide reads, in one-letter code: Mannosylglucosylglycerate synthase (430 aa).

This sequence belongs to the glycosyltransferase group 1 family. Requires a divalent metal cation as cofactor.

The catalysed reaction is (2R)-2-O-(alpha-D-glucopyranosyl)-glycerate + GDP-alpha-D-mannose = (2R)-2-O-[alpha-D-mannopyranosyl-(1-&gt;2)-alpha-D-glucopyranosyl]-glycerate + GDP + H(+). Its function is as follows. Involved in the biosynthesis of the compatible solute mannosylglucosylglycerate through a nonphosphorylating pathway. Catalyzes the synthesis of mannosylglucosylglycerate (MGG) from glucosylglycerate (GG) and GDP-mannose. This chain is Mannosylglucosylglycerate synthase, found in Petrotoga mobilis (strain DSM 10674 / SJ95).